Here is a 294-residue protein sequence, read N- to C-terminus: 4-hydroxy-tetrahydrodipicolinate synthase (294 aa).

Pyruvate is bound at residue T47. Residue Y135 is the Proton donor/acceptor of the active site. K163 functions as the Schiff-base intermediate with substrate in the catalytic mechanism. Position 205 (T205) interacts with pyruvate.

The protein belongs to the DapA family. As to quaternary structure, homotetramer; dimer of dimers.

Its subcellular location is the cytoplasm. The catalysed reaction is L-aspartate 4-semialdehyde + pyruvate = (2S,4S)-4-hydroxy-2,3,4,5-tetrahydrodipicolinate + H2O + H(+). The protein operates within amino-acid biosynthesis; L-lysine biosynthesis via DAP pathway; (S)-tetrahydrodipicolinate from L-aspartate: step 3/4. In terms of biological role, catalyzes the condensation of (S)-aspartate-beta-semialdehyde [(S)-ASA] and pyruvate to 4-hydroxy-tetrahydrodipicolinate (HTPA). The protein is 4-hydroxy-tetrahydrodipicolinate synthase of Rickettsia akari (strain Hartford).